Consider the following 213-residue polypeptide: Uridine kinase (213 aa).

Gly-15–Ser-22 contacts ATP.

Belongs to the uridine kinase family.

Its subcellular location is the cytoplasm. The enzyme catalyses uridine + ATP = UMP + ADP + H(+). It carries out the reaction cytidine + ATP = CMP + ADP + H(+). The protein operates within pyrimidine metabolism; CTP biosynthesis via salvage pathway; CTP from cytidine: step 1/3. Its pathway is pyrimidine metabolism; UMP biosynthesis via salvage pathway; UMP from uridine: step 1/1. The chain is Uridine kinase from Serratia proteamaculans (strain 568).